Here is a 282-residue protein sequence, read N- to C-terminus: MINVTLSPSVTVGNEAPFTLFGGINVLESRDLALRAAEEYVRVTQKLGIPYVFKGSFDKANRSSIHSYRGPGLEEGMKILQAVKDTFGVPVITDVHEPWQAAPVAEVADVVQLPAFLARQTDLVEALAKTGRAVNIKKPQFMSPAQIQNVVEKFVEAGNEQLILCDRGTCLGYDNLVVDMLGFGVMKKVSGNRPVIFDVTHSLQQRESGAAASGGRRAQVAELARAGMAVGLAGLFLEAHPNPAEAKCDGPSALPLAQLEPFLAQVKAIDDLVKSFAPLQID.

Belongs to the KdsA family.

It localises to the cytoplasm. It catalyses the reaction D-arabinose 5-phosphate + phosphoenolpyruvate + H2O = 3-deoxy-alpha-D-manno-2-octulosonate-8-phosphate + phosphate. Its pathway is carbohydrate biosynthesis; 3-deoxy-D-manno-octulosonate biosynthesis; 3-deoxy-D-manno-octulosonate from D-ribulose 5-phosphate: step 2/3. It functions in the pathway bacterial outer membrane biogenesis; lipopolysaccharide biosynthesis. This chain is 2-dehydro-3-deoxyphosphooctonate aldolase, found in Chromobacterium violaceum (strain ATCC 12472 / DSM 30191 / JCM 1249 / CCUG 213 / NBRC 12614 / NCIMB 9131 / NCTC 9757 / MK).